Consider the following 979-residue polypeptide: Glycine dehydrogenase (decarboxylating) (979 aa).

At lysine 726 the chain carries N6-(pyridoxal phosphate)lysine.

Belongs to the GcvP family. As to quaternary structure, the glycine cleavage system is composed of four proteins: P, T, L and H. The cofactor is pyridoxal 5'-phosphate.

The catalysed reaction is N(6)-[(R)-lipoyl]-L-lysyl-[glycine-cleavage complex H protein] + glycine + H(+) = N(6)-[(R)-S(8)-aminomethyldihydrolipoyl]-L-lysyl-[glycine-cleavage complex H protein] + CO2. In terms of biological role, the glycine cleavage system catalyzes the degradation of glycine. The P protein binds the alpha-amino group of glycine through its pyridoxal phosphate cofactor; CO(2) is released and the remaining methylamine moiety is then transferred to the lipoamide cofactor of the H protein. In Ralstonia pickettii (strain 12J), this protein is Glycine dehydrogenase (decarboxylating).